We begin with the raw amino-acid sequence, 464 residues long: L-cysteine:1D-myo-inositol 2-amino-2-deoxy-alpha-D-glucopyranoside ligase (464 aa).

Position 67 (C67) interacts with Zn(2+). L-cysteinyl-5'-AMP contacts are provided by residues 67-70 (CGIT), T82, and 105-107 (NVT). The short motif at 69 to 79 (ITPYDATHLGH) is the 'HIGH' region element. The 'ERGGDP' region motif lies at 207–212 (ERGGDP). Residue W247 participates in L-cysteinyl-5'-AMP binding. C251 is a binding site for Zn(2+). 269–271 (GTD) lines the L-cysteinyl-5'-AMP pocket. Position 276 (H276) interacts with Zn(2+). An L-cysteinyl-5'-AMP-binding site is contributed by V303. Residues 309-313 (KMSKS) carry the 'KMSKS' region motif. The segment at 410 to 435 (AGGSAGAGPDPTHQGGPVRGSGGDVP) is disordered.

This sequence belongs to the class-I aminoacyl-tRNA synthetase family. MshC subfamily. As to quaternary structure, monomer. Requires Zn(2+) as cofactor.

The catalysed reaction is 1D-myo-inositol 2-amino-2-deoxy-alpha-D-glucopyranoside + L-cysteine + ATP = 1D-myo-inositol 2-(L-cysteinylamino)-2-deoxy-alpha-D-glucopyranoside + AMP + diphosphate + H(+). Catalyzes the ATP-dependent condensation of GlcN-Ins and L-cysteine to form L-Cys-GlcN-Ins. This Frankia casuarinae (strain DSM 45818 / CECT 9043 / HFP020203 / CcI3) protein is L-cysteine:1D-myo-inositol 2-amino-2-deoxy-alpha-D-glucopyranoside ligase.